The chain runs to 261 residues: Sulfur carrier protein FdhD (261 aa).

Cysteine 105 acts as the Cysteine persulfide intermediate in catalysis. Residue phenylalanine 245–arginine 250 coordinates Mo-bis(molybdopterin guanine dinucleotide).

Belongs to the FdhD family.

The protein resides in the cytoplasm. Required for formate dehydrogenase (FDH) activity. Acts as a sulfur carrier protein that transfers sulfur from IscS to the molybdenum cofactor prior to its insertion into FDH. The chain is Sulfur carrier protein FdhD from Listeria monocytogenes serovar 1/2a (strain ATCC BAA-679 / EGD-e).